Here is a 237-residue protein sequence, read N- to C-terminus: Class B acid phosphatase (237 aa).

The N-terminal stretch at 1–23 is a signal peptide; it reads MRKVTLVFSAIAFAFSLNGVVQA. The active-site Nucleophile is Asp-69. Residues Asp-69 and Asp-71 each contribute to the Mg(2+) site. Catalysis depends on Asp-71, which acts as the Proton donor. Residues 137–138 and Lys-177 contribute to the substrate site; that span reads TG. Asp-192 is a binding site for Mg(2+).

It belongs to the class B bacterial acid phosphatase family. In terms of assembly, homotetramer. It depends on Mg(2+) as a cofactor.

Its subcellular location is the periplasm. The catalysed reaction is a phosphate monoester + H2O = an alcohol + phosphate. In terms of biological role, dephosphorylates several organic phosphate monoesters. Also has a phosphotransferase activity catalyzing the transfer of low-energy phosphate groups from organic phosphate monoesters to free hydroxyl groups of various organic compounds. The chain is Class B acid phosphatase from Xenorhabdus bovienii (strain SS-2004) (Xenorhabdus nematophila subsp. bovienii).